The chain runs to 227 residues: MGDAGSERSKAPSLPPRCPCGFWGSSKTMNLCSKCFADFQKKQPDDDSTPSTSNSQSDLFSEETTSDNNNTSVTTPTLSPSQQSLPTELNVTSPSTEECGPCTDTAHVSLITPTKRSCGADSQSENEASPVKRPRLVENPERPEESGRSKQKSRRRCFQCQTKLELVQQELGSCRCGYVFCMLHRLPEQHDCTFDHMGRGREEAIMKMVKLDRKVGRSCQRIGEGCS.

Residues 12 to 44 (PSLPPRCPCGFWGSSKTMNLCSKCFADFQKKQP) form an A20-type zinc finger. Residues Cys18, Cys20, Cys32, and Cys35 each contribute to the Zn(2+) site. Disordered stretches follow at residues 41-99 (KKQP…TEEC) and 113-151 (PTKRSCGADSQSENEASPVKRPRLVENPERPEESGRSKQ). Composition is skewed to low complexity over residues 49–59 (TPSTSNSQSDL) and 66–77 (SDNNNTSVTTPT). Composition is skewed to polar residues over residues 78 to 96 (LSPSQQSLPTELNVTSPST) and 113 to 127 (PTKRSCGADSQSENE). The segment covering 135–148 (RLVENPERPEESGR) has biased composition (basic and acidic residues). An AN1-type zinc finger spans residues 151–200 (QKSRRRCFQCQTKLELVQQELGSCRCGYVFCMLHRLPEQHDCTFDHMGRG). Positions 157, 160, 174, 176, 181, 184, 190, and 192 each coordinate Zn(2+).

Expressed in testis.

This Mus musculus (Mouse) protein is AN1-type zinc finger protein 3 (Zfand3).